Consider the following 252-residue polypeptide: MSRFQLEEMLRAGVHFGHLARRWCPKMKPYIFMEKNGVHIIDLQKTLVLADDALNALEAIAQTGREIMFVGTKKQAKRIISAEAERAGMPYVCERWLGGMLTNFSTIRQSIRRMNSIDRMETDGTFDMITKKERLMLVREKEKLMRILGGIATMTRLPAALFVVDIKKEHIAIKEARSLGIPIFAMVDTNCDPELVDFIIPANDDAIRSIQLMVKAVADTIVNSRELKVEQEVLAGMDEEDGDAVEGDAAGE.

It belongs to the universal ribosomal protein uS2 family.

In Chlorobium phaeobacteroides (strain DSM 266 / SMG 266 / 2430), this protein is Small ribosomal subunit protein uS2.